Consider the following 174-residue polypeptide: Endoribonuclease YbeY (174 aa).

The Zn(2+) site is built by H129, H133, and H139.

Belongs to the endoribonuclease YbeY family. It depends on Zn(2+) as a cofactor.

It localises to the cytoplasm. Single strand-specific metallo-endoribonuclease involved in late-stage 70S ribosome quality control and in maturation of the 3' terminus of the 16S rRNA. The polypeptide is Endoribonuclease YbeY (Lactobacillus delbrueckii subsp. bulgaricus (strain ATCC 11842 / DSM 20081 / BCRC 10696 / JCM 1002 / NBRC 13953 / NCIMB 11778 / NCTC 12712 / WDCM 00102 / Lb 14)).